Reading from the N-terminus, the 74-residue chain is High-potential iron-sulfur protein (74 aa).

Residues Cys-36, Cys-39, Cys-53, and Cys-67 each contribute to the [4Fe-4S] cluster site.

This sequence belongs to the high-potential iron-sulfur protein (HiPIP) family. In terms of assembly, homodimer.

Functionally, specific class of high-redox-potential 4Fe-4S ferredoxins. Functions in anaerobic electron transport in most purple and in some other photosynthetic bacteria and in at least one genus (Paracoccus) of halophilic, denitrifying bacteria. The polypeptide is High-potential iron-sulfur protein (hip) (Rubrivivax gelatinosus (Rhodocyclus gelatinosus)).